Consider the following 693-residue polypeptide: UvrABC system protein C (693 aa).

One can recognise a GIY-YIG domain in the interval 16-95 (DAPGVYRFRD…IKEFDPRFNV (80 aa)). The UVR domain occupies 208–243 (GVFLRRLESEMAAASAELDFERAARVRDDINALRRV). A disordered region spans residues 656–693 (APSPDDATTEPGAVGEPGTADGAAADPDGRDAVVVPEG). Positions 672–693 (PGTADGAAADPDGRDAVVVPEG) are enriched in low complexity.

Belongs to the UvrC family. In terms of assembly, interacts with UvrB in an incision complex.

It is found in the cytoplasm. Functionally, the UvrABC repair system catalyzes the recognition and processing of DNA lesions. UvrC both incises the 5' and 3' sides of the lesion. The N-terminal half is responsible for the 3' incision and the C-terminal half is responsible for the 5' incision. The chain is UvrABC system protein C from Beutenbergia cavernae (strain ATCC BAA-8 / DSM 12333 / CCUG 43141 / JCM 11478 / NBRC 16432 / NCIMB 13614 / HKI 0122).